Here is a 461-residue protein sequence, read N- to C-terminus: Ribitol-5-phosphate transferase FKTN (461 aa).

The Cytoplasmic segment spans residues 1–7; the sequence is MSRINKN. Positions 6–27 are required and sufficient for interaction with POMGNT1; sequence KNVVLALLTLTSSAFLLFQLYY. The helical; Signal-anchor for type II membrane protein transmembrane segment at 8–28 threads the bilayer; the sequence is VVLALLTLTSSAFLLFQLYYY. Residues 29–461 lie on the Lumenal side of the membrane; that stretch reads KHYLSTKNGA…SEWDEVIQLY (433 aa). N-linked (GlcNAc...) asparagine glycosylation is present at asparagine 92.

The protein belongs to the LicD transferase family. Forms a complex composed of FKTN/fukutin, FKRP and RXYLT1/TMEM5. Interacts (via transmembrane domain) with POMGNT1; the interaction is direct and is required for normal POMGNT1 location in Golgi membranes. Expressed in the retina (at protein level). Widely expressed with highest expression in brain, heart, pancreas and skeletal muscle. Expressed at similar levels in control fetal and adult brain. Expressed in migrating neurons, including Cajar-Retzius cells and adult cortical neurons, as well as hippocampal pyramidal cells and cerebellar Purkinje cells. No expression observed in the glia limitans, the subpial astrocytes (which contribute to basement membrane formation) or other glial cells.

The protein resides in the golgi apparatus membrane. It is found in the cytoplasm. The protein localises to the nucleus. The enzyme catalyses 3-O-[beta-D-GalNAc-(1-&gt;3)-beta-D-GlcNAc-(1-&gt;4)-(O-6-P-alpha-D-Man)]-Thr-[protein] + CDP-L-ribitol = 3-O-[Rib-ol-P-3-beta-D-GalNAc-(1-&gt;3)-beta-D-GlcNAc-(1-&gt;4)-(O-6-P-alpha-D-Man)]-Thr-[protein] + CMP + H(+). It participates in protein modification; protein glycosylation. Functionally, catalyzes the transfer of a ribitol-phosphate from CDP-ribitol to the distal N-acetylgalactosamine of the phosphorylated O-mannosyl trisaccharide (N-acetylgalactosamine-beta-3-N-acetylglucosamine-beta-4-(phosphate-6-)mannose), a carbohydrate structure present in alpha-dystroglycan (DAG1). This constitutes the first step in the formation of the ribitol 5-phosphate tandem repeat which links the phosphorylated O-mannosyl trisaccharide to the ligand binding moiety composed of repeats of 3-xylosyl-alpha-1,3-glucuronic acid-beta-1. Required for normal location of POMGNT1 in Golgi membranes, and for normal POMGNT1 activity. May interact with and reinforce a large complex encompassing the outside and inside of muscle membranes. Could be involved in brain development. This is Ribitol-5-phosphate transferase FKTN from Homo sapiens (Human).